Here is a 318-residue protein sequence, read N- to C-terminus: N-succinylornithine carbamoyltransferase (318 aa).

Carbamoyl phosphate-binding positions include 47 to 50 (SLRT), Trp75, and Arg110. Glu142 lines the N(2)-succinyl-L-ornithine pocket. 147-150 (HPLQ) provides a ligand contact to carbamoyl phosphate. 2 residues coordinate N(2)-succinyl-L-ornithine: His176 and Lys236. Residue 274 to 275 (CL) participates in carbamoyl phosphate binding. A N(2)-succinyl-L-ornithine-binding site is contributed by Arg278. Arg302 serves as a coordination point for carbamoyl phosphate.

The protein belongs to the aspartate/ornithine carbamoyltransferase superfamily. SOTCase family. As to quaternary structure, homotrimer.

It carries out the reaction N(2)-succinyl-L-ornithine + carbamoyl phosphate = N(2)-succinyl-L-citrulline + phosphate + H(+). It participates in amino-acid biosynthesis; L-arginine biosynthesis. Its function is as follows. Catalyzes the transfer of the carbamoyl group from carbamoyl phosphate to the delta-amino group of N(2)-succinyl-L-ornithine to produce N(2)-succinyl-L-citrulline. Is essential for arginine biosynthesis. Has no activity with either L-ornithine or L-aspartate as substrate. Also has no detectable AOTCase activity, being unable to convert N(2)-acetyl-L-ornithine to N(2)-acetyl-L-citrulline. This chain is N-succinylornithine carbamoyltransferase, found in Bacteroides thetaiotaomicron (strain ATCC 29148 / DSM 2079 / JCM 5827 / CCUG 10774 / NCTC 10582 / VPI-5482 / E50).